Reading from the N-terminus, the 673-residue chain is DNA ligase (673 aa).

Residues 33–37, 82–83, and Glu-117 contribute to the NAD(+) site; these read DSVYD and SL. Lys-119 serves as the catalytic N6-AMP-lysine intermediate. Residues Arg-140, Glu-177, Lys-295, and Lys-319 each coordinate NAD(+). Zn(2+)-binding residues include Cys-413, Cys-416, Cys-431, and Cys-436. The 79-residue stretch at 595-673 folds into the BRCT domain; the sequence is AVSQVLAGKK…EAELLALDPK (79 aa).

This sequence belongs to the NAD-dependent DNA ligase family. LigA subfamily. Mg(2+) is required as a cofactor. Requires Mn(2+) as cofactor.

It carries out the reaction NAD(+) + (deoxyribonucleotide)n-3'-hydroxyl + 5'-phospho-(deoxyribonucleotide)m = (deoxyribonucleotide)n+m + AMP + beta-nicotinamide D-nucleotide.. In terms of biological role, DNA ligase that catalyzes the formation of phosphodiester linkages between 5'-phosphoryl and 3'-hydroxyl groups in double-stranded DNA using NAD as a coenzyme and as the energy source for the reaction. It is essential for DNA replication and repair of damaged DNA. The protein is DNA ligase of Synechococcus sp. (strain JA-3-3Ab) (Cyanobacteria bacterium Yellowstone A-Prime).